Here is a 180-residue protein sequence, read N- to C-terminus: Stathmin-3 (180 aa).

2 S-palmitoyl cysteine lipidation sites follow: Cys-22 and Cys-24. In terms of domain architecture, SLD spans Gly-38–Gly-180. Phosphoserine occurs at positions 50, 60, 65, 68, 72, 73, and 81. The interval Lys-59–Leu-82 is disordered. Over residues Ser-60–Pro-74 the composition is skewed to low complexity. A coiled-coil region spans residues Pro-75–Ser-179.

This sequence belongs to the stathmin family. In terms of assembly, interacts with STAT3. Interacts with CLU (secreted form); this interaction may act as an important modulator during neuronal differentiation. In terms of processing, N-terminal palmitoylation promotes specific anchoring to the cytosolic leaflet of Golgi membranes and subsequent vesicular trafficking along dendrites and axons. Neuronal Stathmins are substrates for palmitoyltransferases ZDHHC3, ZDHHC7 and ZDHHC15. As to expression, neuron specific.

The protein resides in the golgi apparatus. Its subcellular location is the cell projection. It is found in the growth cone. It localises to the axon. The protein localises to the cytoplasm. The protein resides in the cytosol. Exhibits microtubule-destabilizing activity, which is antagonized by STAT3. This chain is Stathmin-3 (STMN3), found in Homo sapiens (Human).